Here is a 172-residue protein sequence, read N- to C-terminus: Protein GrpE (172 aa).

The protein belongs to the GrpE family. Homodimer.

Its subcellular location is the cytoplasm. Participates actively in the response to hyperosmotic and heat shock by preventing the aggregation of stress-denatured proteins, in association with DnaK and GrpE. It is the nucleotide exchange factor for DnaK and may function as a thermosensor. Unfolded proteins bind initially to DnaJ; upon interaction with the DnaJ-bound protein, DnaK hydrolyzes its bound ATP, resulting in the formation of a stable complex. GrpE releases ADP from DnaK; ATP binding to DnaK triggers the release of the substrate protein, thus completing the reaction cycle. Several rounds of ATP-dependent interactions between DnaJ, DnaK and GrpE are required for fully efficient folding. In Thermotoga petrophila (strain ATCC BAA-488 / DSM 13995 / JCM 10881 / RKU-1), this protein is Protein GrpE.